The chain runs to 369 residues: Glycerol-3-phosphate dehydrogenase [NAD(P)+] (369 aa).

Residues Ser-6, Trp-7, Arg-27, Arg-28, and Lys-101 each contribute to the NADPH site. The sn-glycerol 3-phosphate site is built by Lys-101 and Gly-131. Residue Ala-135 participates in NADPH binding. Residues Lys-186, Asp-239, Ser-249, Arg-250, and Asn-251 each contribute to the sn-glycerol 3-phosphate site. Lys-186 (proton acceptor) is an active-site residue. Residue Arg-250 participates in NADPH binding. Glu-276 contributes to the NADPH binding site. The segment at 312 to 369 is disordered; it reads KDIAPHLTTDDEPQGERTRGERTTDDGQGQGRTSVWGSLKRAFDQLRDGGGSSRRDRP. 2 stretches are compositionally biased toward basic and acidic residues: residues 325-336 and 352-369; these read QGERTRGERTTD and RAFDQLRDGGGSSRRDRP.

This sequence belongs to the NAD-dependent glycerol-3-phosphate dehydrogenase family.

The protein localises to the cytoplasm. It carries out the reaction sn-glycerol 3-phosphate + NAD(+) = dihydroxyacetone phosphate + NADH + H(+). The catalysed reaction is sn-glycerol 3-phosphate + NADP(+) = dihydroxyacetone phosphate + NADPH + H(+). It functions in the pathway membrane lipid metabolism; glycerophospholipid metabolism. Its function is as follows. Catalyzes the reduction of the glycolytic intermediate dihydroxyacetone phosphate (DHAP) to sn-glycerol 3-phosphate (G3P), the key precursor for phospholipid synthesis. The protein is Glycerol-3-phosphate dehydrogenase [NAD(P)+] of Leifsonia xyli subsp. xyli (strain CTCB07).